Consider the following 239-residue polypeptide: MNVNFFVTCIGDALKSRMARDSVLLLEKLGCRVNFPEKQGCCGQPAINSGYIKEAIPGMKNLIAALEDNDDPIISPAGSCTYAVKSYPTYLADEPEWASRAAKVAARMQDLTSFIVNKLGVVDVGASLQGRAVYHPSCSLARKLGVKDEPLTLLKNVRGLELLTFAEQDTCCGFGGTFSVKMAEISGEMVKEKVAHLMEVRPEYLIGADVSCLLNISGRLQREGQKVKVMHIAEVLMSR.

It belongs to the LutA/YkgE family.

This is an uncharacterized protein from Escherichia coli (strain K12).